The primary structure comprises 73 residues: U3-agatoxin-Ao1e (73 aa).

An N-terminal signal peptide occupies residues 1 to 20; it reads MRTIISLLLLSAMVFAVIEA. The propeptide occupies 21–34; it reads ISLEEGLQLFEGER. Cystine bridges form between cysteine 36/cysteine 52, cysteine 43/cysteine 57, cysteine 51/cysteine 67, and cysteine 59/cysteine 65. The residue at position 71 (asparagine 71) is an Asparagine amide.

It belongs to the neurotoxin 07 (Beta/delta-agtx) family. 03 (aga-4) subfamily. Aga sub-subfamily. Expressed by the venom gland.

The protein resides in the secreted. In terms of biological role, insecticidal neurotoxin that induces an irreversible spastic paralysis when injected into insects. Modifies presynaptic voltage-gated sodium channels (Nav), causing them to open at the normal resting potential of the nerve. This leads to spontaneous release of neurotransmitter and repetitive action potentials in motor neurons. This Agelena orientalis (Funnel-web spider) protein is U3-agatoxin-Ao1e.